We begin with the raw amino-acid sequence, 257 residues long: Protein-tyrosine-phosphatase IBR5 (257 aa).

Positions 49–185 (FPSEILPEFL…LQEFEQGIFG (137 aa)) constitute a Tyrosine-protein phosphatase domain. Residue cysteine 129 is the Phosphocysteine intermediate of the active site. Residues 235-257 (QEFTFGATPPKPTTGGDIAMDGS) form a disordered region.

This sequence belongs to the protein-tyrosine phosphatase family. In terms of assembly, interacts with SKP1A/ASK1 and with MPK12. Expressed in root tips and vasculature, cotyledons, stems, leaves vasculature and hydathodes, flowers, siliques, and seeds.

It localises to the nucleus. The catalysed reaction is O-phospho-L-tyrosyl-[protein] + H2O = L-tyrosyl-[protein] + phosphate. Its function is as follows. Required for the transduction of auxin and abscisic acid (ABA) signaling pathways. Dephosphorylates and inactivates the MAP kinase MPK12. In Arabidopsis thaliana (Mouse-ear cress), this protein is Protein-tyrosine-phosphatase IBR5 (IBR5).